We begin with the raw amino-acid sequence, 639 residues long: Immunoglobulin-like domain-containing receptor 2 (639 aa).

Residues Met1–Gly20 form the signal peptide. Residues Leu21 to Glu162 form the Ig-like V-type domain. Topologically, residues Leu21–Glu186 are lumenal. A disulfide bridge links Cys42 with Cys145. A helical membrane pass occupies residues Trp187–Cys207. Residues Trp208–Val639 lie on the Cytoplasmic side of the membrane. Disordered regions lie at residues Leu273–Arg295, Trp374–Arg415, and Tyr437–Val639. Basic and acidic residues-rich tracts occupy residues Tyr393–Ser414 and Arg442–Ala464. Position 473 is a phosphoserine (Ser473). A compositionally biased stretch (basic and acidic residues) spans Arg483–Arg493. The residue at position 544 (Arg544) is an Omega-N-methylarginine. Ser579 carries the phosphoserine modification. The segment covering Arg606–Glu617 has biased composition (basic and acidic residues).

The protein belongs to the immunoglobulin superfamily. LISCH7 family. As to quaternary structure, interacts with MARVELD2 and OCLN. Interacts with P4HB AND HSPA5; the interaction with HSPA5 stabilizes ILDR2 expression. Interacts (via C-terminus) with TRA2A, TRA2B and SRSF1. Expressed in testis, brain, pituitary, colon, heart, nerves, prostate, esophagus, lung liver and small intestine. Highly expressed in macrophages, also expressed in monocytes and at low levels in NK and NKT cells (at protein level).

The protein resides in the endoplasmic reticulum membrane. The protein localises to the cell junction. Its subcellular location is the tight junction. It is found in the nucleus. In terms of biological role, may be involved in ER stress pathways with effects on lipid homeostasis and insulin secretion. With ILDR1 and LSR, involved in the maintain of the epithelial barrier function through the recruitment of MARVELD2/tricellulin to tricellular tight junctions. Also functions as a B7-like protein family member expressed on immune cells and inflamed tissue and with T-cell inhibitory activity. In the inner ear, may regulate alternative pre-mRNA splicing via binding to TRA2A, TRA2B and SRSF1. The polypeptide is Immunoglobulin-like domain-containing receptor 2 (Homo sapiens (Human)).